We begin with the raw amino-acid sequence, 449 residues long: MDDSLWSACLQQLEREIPEQQLNTWIRPLQAHLEGDALRLYAPNRFVLDWVRDNFSARIGELLAEIRPDEHLRVELEIGSPPTPDQREAATGATRAAPAQRSSEPRQRPVDSNLNPGFTFDSFVEGKSNQLARAASMQVADNPGGAYNPLFLYGGVGLGKTHLMHAVGNAIRTARPEARVLYLHSERFVAEMVKALQHNAINEFKRHYRNLDALLIDDIQFFAGKERSQEEFFHTFNALLESEQQVIMTCDRYPKEVNGLEERLKSRFGWGLTVAIEPPELETRVAILKSKAIRDGVDLPDEVAFFVAKRLRSNVRELEGALRRITANAQFTGRAIDVDFAKEALRDLLALQDKLVTIDNIQKTVAAYYKIRVGDLLSKRRSRSITRPRHMAMVLAKELTSHSLPEIGDAFGGRDHSTVLHACRNIKSLIEDDARLAEDYDNLLRTLST.

The segment at Met-1 to Thr-83 is domain I, interacts with DnaA modulators. Residues Glu-77–Leu-114 form a disordered region. The tract at residues Thr-83–Ser-112 is domain II. Over residues Ala-89 to Ala-99 the composition is skewed to low complexity. A domain III, AAA+ region region spans residues Asn-113 to Ala-329. ATP-binding residues include Gly-157, Gly-159, Lys-160, and Thr-161. The tract at residues Gln-330–Thr-449 is domain IV, binds dsDNA.

The protein belongs to the DnaA family. As to quaternary structure, oligomerizes as a right-handed, spiral filament on DNA at oriC.

Its subcellular location is the cytoplasm. Its function is as follows. Plays an essential role in the initiation and regulation of chromosomal replication. ATP-DnaA binds to the origin of replication (oriC) to initiate formation of the DNA replication initiation complex once per cell cycle. Binds the DnaA box (a 9 base pair repeat at the origin) and separates the double-stranded (ds)DNA. Forms a right-handed helical filament on oriC DNA; dsDNA binds to the exterior of the filament while single-stranded (ss)DNA is stabiized in the filament's interior. The ATP-DnaA-oriC complex binds and stabilizes one strand of the AT-rich DNA unwinding element (DUE), permitting loading of DNA polymerase. After initiation quickly degrades to an ADP-DnaA complex that is not apt for DNA replication. Binds acidic phospholipids. The polypeptide is Chromosomal replication initiator protein DnaA (Halorhodospira halophila (strain DSM 244 / SL1) (Ectothiorhodospira halophila (strain DSM 244 / SL1))).